Here is a 317-residue protein sequence, read N- to C-terminus: Protease HtpX homolog (317 aa).

The next 2 membrane-spanning stretches (helical) occupy residues 14-34 (LMGIAIFAIGFGIIYAILYYI) and 41-61 (IALLMVLLPIFIIMDIVQWLF). His146 lines the Zn(2+) pocket. The active site involves Glu147. His150 is a Zn(2+) binding site. The next 2 membrane-spanning stretches (helical) occupy residues 158–178 (MLLAIGLIPTLIFYFGYTLLF) and 189–209 (IVLLAIIAMAASFLFRFLILA). Glu215 is a binding site for Zn(2+).

The protein belongs to the peptidase M48B family. Zn(2+) serves as cofactor.

The protein resides in the cell membrane. This Thermoplasma acidophilum (strain ATCC 25905 / DSM 1728 / JCM 9062 / NBRC 15155 / AMRC-C165) protein is Protease HtpX homolog.